The chain runs to 482 residues: Ribulose bisphosphate carboxylase large chain (482 aa).

Positions Met-1–Ser-2 are excised as a propeptide. Pro-3 carries the post-translational modification N-acetylproline. The residue at position 14 (Lys-14) is an N6,N6,N6-trimethyllysine. Substrate-binding residues include Asn-123 and Thr-173. Lys-175 serves as the catalytic Proton acceptor. Lys-177 serves as a coordination point for substrate. Mg(2+) is bound by residues Lys-201, Asp-203, and Glu-204. Lys-201 bears the N6-carboxylysine mark. Residue His-294 is the Proton acceptor of the active site. Substrate-binding residues include Arg-295, His-327, and Ser-379.

Belongs to the RuBisCO large chain family. Type I subfamily. Heterohexadecamer of 8 large chains and 8 small chains; disulfide-linked. The disulfide link is formed within the large subunit homodimers. It depends on Mg(2+) as a cofactor. The disulfide bond which can form in the large chain dimeric partners within the hexadecamer appears to be associated with oxidative stress and protein turnover.

It localises to the plastid. Its subcellular location is the chloroplast. The enzyme catalyses 2 (2R)-3-phosphoglycerate + 2 H(+) = D-ribulose 1,5-bisphosphate + CO2 + H2O. It carries out the reaction D-ribulose 1,5-bisphosphate + O2 = 2-phosphoglycolate + (2R)-3-phosphoglycerate + 2 H(+). In terms of biological role, ruBisCO catalyzes two reactions: the carboxylation of D-ribulose 1,5-bisphosphate, the primary event in carbon dioxide fixation, as well as the oxidative fragmentation of the pentose substrate in the photorespiration process. Both reactions occur simultaneously and in competition at the same active site. This is Ribulose bisphosphate carboxylase large chain from Phytolacca americana (American pokeweed).